Reading from the N-terminus, the 547-residue chain is Chaperonin GroEL 1 (547 aa).

ATP contacts are provided by residues 30 to 33 (TLGP), Lys-51, 87 to 91 (DGTTT), Gly-415, and Asp-496. The disordered stretch occupies residues 525–547 (KPEPKSPAGGPGMGGMGGMDGMM). Gly residues predominate over residues 533–547 (GGPGMGGMGGMDGMM).

The protein belongs to the chaperonin (HSP60) family. In terms of assembly, forms a cylinder of 14 subunits composed of two heptameric rings stacked back-to-back. Interacts with the co-chaperonin GroES.

The protein resides in the cytoplasm. The enzyme catalyses ATP + H2O + a folded polypeptide = ADP + phosphate + an unfolded polypeptide.. Together with its co-chaperonin GroES, plays an essential role in assisting protein folding. The GroEL-GroES system forms a nano-cage that allows encapsulation of the non-native substrate proteins and provides a physical environment optimized to promote and accelerate protein folding. The polypeptide is Chaperonin GroEL 1 (Cereibacter sphaeroides (strain ATCC 17023 / DSM 158 / JCM 6121 / CCUG 31486 / LMG 2827 / NBRC 12203 / NCIMB 8253 / ATH 2.4.1.) (Rhodobacter sphaeroides)).